The sequence spans 809 residues: Phenylalanine--tRNA ligase beta subunit (809 aa).

A tRNA-binding domain is found at 39–154 (APPTSKIVVG…EDTPVGQDIR (116 aa)). A B5 domain is found at 405 to 480 (PQRAPVKMRV…RIYGFEKIPA (76 aa)). Positions 458, 464, 467, and 468 each coordinate Mg(2+). Residues 707-808 (SKFPPVRRDI…RMARAGARLR (102 aa)) enclose the FDX-ACB domain.

The protein belongs to the phenylalanyl-tRNA synthetase beta subunit family. Type 1 subfamily. In terms of assembly, tetramer of two alpha and two beta subunits. Mg(2+) is required as a cofactor.

The protein localises to the cytoplasm. It carries out the reaction tRNA(Phe) + L-phenylalanine + ATP = L-phenylalanyl-tRNA(Phe) + AMP + diphosphate + H(+). The polypeptide is Phenylalanine--tRNA ligase beta subunit (Burkholderia lata (strain ATCC 17760 / DSM 23089 / LMG 22485 / NCIMB 9086 / R18194 / 383)).